A 163-amino-acid chain; its full sequence is MGKRNLDETMNESTVSEANGDATAPTTEKDEYQALCELVNPIAQPLANRKLAKKVYKLIKKASAGDKTLREGIKDVQKELRRNEKGICILAGNVSPIDVYSHIPGICEEKEIPYVYIPSREQLGLAVGHRRPSILIFVKPSGDFKELYDEVAEALRHLTVEAA.

The tract at residues 1 to 27 (MGKRNLDETMNESTVSEANGDATAPTT) is disordered.

This sequence belongs to the eukaryotic ribosomal protein eL8 family. As to quaternary structure, component of the small nucleolar ribonucleoprotein particle containing H/ACA-type snoRNAs (H/ACA snoRNPs).

It is found in the nucleus. The protein resides in the nucleolus. Its function is as follows. Required for ribosome biogenesis. Part of a complex which catalyzes pseudouridylation of rRNA. This involves the isomerization of uridine such that the ribose is subsequently attached to C5, instead of the normal N1. Pseudouridine ('psi') residues may serve to stabilize the conformation of rRNAs. In Caenorhabditis elegans, this protein is Putative H/ACA ribonucleoprotein complex subunit 2-like protein.